Consider the following 451-residue polypeptide: Tubulin alpha-3 chain (451 aa).

Q11 lines the GTP pocket. N6-acetyllysine is present on K40. 6 residues coordinate GTP: E71, G144, T145, T179, N206, and N228. E71 contributes to the Mg(2+) binding site. E254 is an active-site residue.

It belongs to the tubulin family. In terms of assembly, dimer of alpha and beta chains. A typical microtubule is a hollow water-filled tube with an outer diameter of 25 nm and an inner diameter of 15 nM. Alpha-beta heterodimers associate head-to-tail to form protofilaments running lengthwise along the microtubule wall with the beta-tubulin subunit facing the microtubule plus end conferring a structural polarity. Microtubules usually have 13 protofilaments but different protofilament numbers can be found in some organisms and specialized cells. It depends on Mg(2+) as a cofactor. Undergoes a tyrosination/detyrosination cycle, the cyclic removal and re-addition of a C-terminal tyrosine residue by the enzymes tubulin tyrosine carboxypeptidase (TTCP) and tubulin tyrosine ligase (TTL), respectively. Post-translationally, acetylation of alpha chains at Lys-40 stabilizes microtubules and affects affinity and processivity of microtubule motors. This modification has a role in multiple cellular functions, ranging from cell motility, cell cycle progression or cell differentiation to intracellular trafficking and signaling.

Its subcellular location is the cytoplasm. The protein localises to the cytoskeleton. The enzyme catalyses GTP + H2O = GDP + phosphate + H(+). Its function is as follows. Tubulin is the major constituent of microtubules, a cylinder consisting of laterally associated linear protofilaments composed of alpha- and beta-tubulin heterodimers. Microtubules grow by the addition of GTP-tubulin dimers to the microtubule end, where a stabilizing cap forms. Below the cap, tubulin dimers are in GDP-bound state, owing to GTPase activity of alpha-tubulin. The sequence is that of Tubulin alpha-3 chain (TUBA3) from Hordeum vulgare (Barley).